The chain runs to 497 residues: MKYLERLTPSCWRIKPGFVPNMKVEGRFYVNKALEALMLEELQQFASARGVGGFLPAVKQIANVASLPGIVGASVGLPDVHSGYGFAIGNMAAFDMDDPEAIVSPGGVGFDINCGVRLLRTNLTLEDVEPVKEQLAQSLFDHIPVGVGSKGVIPMNAKDLEEALEMGMDWSLREGYAWAEDKEHCEEYGRMLQADASKVSARAKKRGLPQLGTLGAGNHYAEIQVVEEIYDKEAAAKMGINKKNQICVMIHSGSRGLGHQVATDALVAMEKAMKRDGIEVNDRQLACARIHSEEGQNYLKAMAAAANYAWVNRSTMTFLCRQAFAKQFNTTPEELDMHVIYDVSHNIAKTERHMVNGTERTLLVHRKGSTRAFPPHHPLIPVDYQLIGQPVLIGGTMGTCSYVLTGTDTGFRDTFGSTCHGAGRALSRAKSRRTLDYQQVLDKLDKKGIAIRVASPKLVMEEAPESYKDVTAVVDTCHAAGISKKVVKLRPIAVIKG.

Mn(2+)-binding residues include Asp-111, Cys-114, His-219, His-251, and His-345. 218–222 is a binding site for GMP; it reads NHYAE. GMP-binding positions include 345–346, 394–397, Ser-401, 420–423, and Lys-496; these read HN, GGTM, and HGAG. The GMP-histidine intermediate role is filled by His-420.

It belongs to the RtcB family. Catalytic component of the tRNA-splicing ligase complex. Mn(2+) is required as a cofactor.

It catalyses the reaction a 3'-end 3'-phospho-ribonucleotide-RNA + a 5'-end dephospho-ribonucleoside-RNA + GTP = a ribonucleotidyl-ribonucleotide-RNA + GMP + diphosphate. The catalysed reaction is a 3'-end 2',3'-cyclophospho-ribonucleotide-RNA + a 5'-end dephospho-ribonucleoside-RNA + GTP + H2O = a ribonucleotidyl-ribonucleotide-RNA + GMP + diphosphate + H(+). Its function is as follows. Catalytic subunit of the tRNA-splicing ligase complex that acts by directly joining spliced tRNA halves to mature-sized tRNAs by incorporating the precursor-derived splice junction phosphate into the mature tRNA as a canonical 3',5'-phosphodiester. May act as an RNA ligase with broad substrate specificity, and may function toward other RNAs. The polypeptide is RNA-splicing ligase RtcB homolog (Monosiga brevicollis (Choanoflagellate)).